Here is a 300-residue protein sequence, read N- to C-terminus: MKILLDLLLLLPLLIVCCLESFVKLFIPKRRKSVAGEIVLITGAGHGIGRLTAYEFAKLKSKLVLWDINKHGLEETAAKCKGLGAKVYTFVVDCSNREDIYSSAKKVKAEIGDVSILVNNAGVVYTSDLFATQDAQIEKTFEVNILAHFWTTKAFLPAMMKNNHGHVVTVASAAGHISVPFLLAYCSSKFSAVGFHKALTDELAALQITGVKTTCLCPNFVNTGFIKNPSTSLGPALEPEEVVNRLMNGILTEQKMIFSPSSIAFLTILERILPERFLAVLKRKINIKFDAVIGYKMKAQ.

Residues 1-18 form the signal peptide; sequence MKILLDLLLLLPLLIVCC. 40-67 lines the NADP(+) pocket; the sequence is LITGAGHGIGRLTAYEFAKLKSKLVLWD. A substrate-binding site is contributed by Ser-172. Residue Tyr-185 is the Proton acceptor of the active site. Lys-189 is an NADP(+) binding site.

Belongs to the short-chain dehydrogenases/reductases (SDR) family. 17-beta-HSD 3 subfamily.

The protein localises to the endoplasmic reticulum. It is found in the lipid droplet. It carries out the reaction 17beta-estradiol + NAD(+) = estrone + NADH + H(+). It catalyses the reaction 17beta-estradiol + NADP(+) = estrone + NADPH + H(+). Can convert androstan-3-alpha,17-beta-diol (3-alpha-diol) to androsterone in vitro, suggesting that it may participate in androgen metabolism during steroidogenesis. May act by metabolizing compounds that stimulate steroid synthesis and/or by generating metabolites that inhibit it. Has no activity toward DHEA (dehydroepiandrosterone), or A-dione (4-androste-3,17-dione), and only a slight activity toward testosterone to A-dione. This Macaca fascicularis (Crab-eating macaque) protein is Estradiol 17-beta-dehydrogenase 11 (HSD17B11).